A 459-amino-acid polypeptide reads, in one-letter code: UDP-N-acetylglucosamine 1-carboxyvinyltransferase (459 aa).

40–41 is a binding site for phosphoenolpyruvate; the sequence is KN. Arg111 provides a ligand contact to UDP-N-acetyl-alpha-D-glucosamine. Cys135 (proton donor) is an active-site residue. 2-(S-cysteinyl)pyruvic acid O-phosphothioketal is present on Cys135. UDP-N-acetyl-alpha-D-glucosamine is bound by residues 140 to 144, Asp324, and Val346; that span reads RPVDL. The disordered stretch occupies residues 437–459; the sequence is PSAPPSEVSSAVAAGPDAAAAPV. The span at 441–459 shows a compositional bias: low complexity; it reads PSEVSSAVAAGPDAAAAPV.

The protein belongs to the EPSP synthase family. MurA subfamily.

The protein resides in the cytoplasm. It carries out the reaction phosphoenolpyruvate + UDP-N-acetyl-alpha-D-glucosamine = UDP-N-acetyl-3-O-(1-carboxyvinyl)-alpha-D-glucosamine + phosphate. Its pathway is cell wall biogenesis; peptidoglycan biosynthesis. Functionally, cell wall formation. Adds enolpyruvyl to UDP-N-acetylglucosamine. This is UDP-N-acetylglucosamine 1-carboxyvinyltransferase from Gloeobacter violaceus (strain ATCC 29082 / PCC 7421).